Consider the following 40-residue polypeptide: Unknown protein from spot 207 of 2D-PAGE of etiolated coleoptile (40 aa).

It belongs to the GST superfamily. HSP26 family.

The protein is Unknown protein from spot 207 of 2D-PAGE of etiolated coleoptile of Zea mays (Maize).